The sequence spans 484 residues: Poly(A) RNA polymerase GLD2 (484 aa).

Phosphoserine is present on residues Ser62 and Ser69. Residues 72-97 (FRGRKRLSDEKNLPLDGKRQRFHSPH) are disordered. A Nuclear localization signal motif is present at residues 76–92 (KRLSDEKNLPLDGKRQR). A compositionally biased stretch (basic and acidic residues) spans 77-90 (RLSDEKNLPLDGKR). Ser95 is subject to Phosphoserine. Residues Asp213 and Asp215 each coordinate Mg(2+). Positions 386-440 (NLGDLLLGFLKYYATEFDWNSQMISVREAKAIPRPDGIEWRNKYICVEEPFDGTN) constitute a PAP-associated domain.

The protein belongs to the DNA polymerase type-B-like family. GLD2 subfamily. As to quaternary structure, interacts with CPEB1, CPEB2, CPSF1 and PABPC1. Interacts with QKI isoform QKI7; promoting recruitment to miRNA miR-122 and miR-122 stabilization. Mg(2+) is required as a cofactor. Requires Mn(2+) as cofactor. As to expression, expressed in brain. Within brain, it is expressed in cerebellum, hippocampus and medulla.

The protein resides in the cytoplasm. The protein localises to the nucleus. It catalyses the reaction RNA(n) + ATP = RNA(n)-3'-adenine ribonucleotide + diphosphate. Functionally, cytoplasmic poly(A) RNA polymerase that adds successive AMP monomers to the 3'-end of specific RNAs, forming a poly(A) tail. In contrast to the canonical nuclear poly(A) RNA polymerase, it only adds poly(A) to selected cytoplasmic mRNAs. Does not play a role in replication-dependent histone mRNA degradation. Adds a single nucleotide to the 3' end of specific miRNAs, monoadenylation stabilizes and prolongs the activity of some but not all miRNAs. The chain is Poly(A) RNA polymerase GLD2 from Homo sapiens (Human).